We begin with the raw amino-acid sequence, 399 residues long: MVVRSLLRVSRLTSASCRHASLAVSSTPKPYIPSVTGVQKSMPFDNLLEQYSRVHWDDSVTYDDPNVQKLFKSLMSGSRAALASAITLVESRHPTKRAQGNMLLKMVLDEEREKYKKFGRDSMIFRVGISGSPGVGKSSFIEALGAELTENRGKKVAVLTIDPTSAMTGGSVLGDLTRMQELSRNPKAYIRQSPTSGSLGGVTRGIHEAVILCEGAGYDIVIIETVGVGQSETSVSDMCDMMCLLLSPAHGDELQGVKRGIMEMSDLLVVTKDDGDLKAKAKMTQAEYISALKFMRPRLDVWRPKVMRSSIMDKESVSEVCSSLYEFWDTIGESGDLERRRQDQMKKWMWNHVKDEIMSVFQKHPKIAHLAPKLENEIRSGKITPGLAAETMIRTFFGV.

The N-terminal 15 residues, 1–15 (MVVRSLLRVSRLTSA), are a transit peptide targeting the mitochondrion. Residues 131-139 (GSPGVGKSS), Asp-274, and 310-312 (SIM) contribute to the GTP site.

It belongs to the SIMIBI class G3E GTPase family. ArgK/MeaB subfamily.

It localises to the mitochondrion. May have GTPase activity. May also bind and hydrolyze ATP. May function as chaperone. Likely to have a role in propionyl-CoA and adenosylcobalamin metabolism. The chain is Methylmalonic aciduria type A homolog, mitochondrial (mmaa-1) from Caenorhabditis elegans.